A 117-amino-acid polypeptide reads, in one-letter code: NADH-ubiquinone oxidoreductase chain 3 (117 aa).

Transmembrane regions (helical) follow at residues 4 to 24 (IIFIALLILLITTIVMFLASI), 60 to 80 (ITIIFLIFDVEIALILPMIII), and 86 to 106 (IMIWTITSIIFILILLIGLYH).

It belongs to the complex I subunit 3 family.

The protein resides in the mitochondrion membrane. The catalysed reaction is a ubiquinone + NADH + 5 H(+)(in) = a ubiquinol + NAD(+) + 4 H(+)(out). Core subunit of the mitochondrial membrane respiratory chain NADH dehydrogenase (Complex I) that is believed to belong to the minimal assembly required for catalysis. Complex I functions in the transfer of electrons from NADH to the respiratory chain. The immediate electron acceptor for the enzyme is believed to be ubiquinone. The protein is NADH-ubiquinone oxidoreductase chain 3 (mt:ND3) of Drosophila melanogaster (Fruit fly).